The following is a 1009-amino-acid chain: Serine/threonine-protein phosphatase BSL2 homolog (1009 aa).

Residues 1-48 (MDVDSRMTTESDSDSDAAAQGGGGGGFGSETSSASPSAPGTPTAMGAG) are disordered. Positions 29-45 (SETSSASPSAPGTPTAM) are enriched in low complexity. Kelch repeat units lie at residues 136–182 (SSAG…VATA), 240–288 (FLLT…TASA), 293–344 (LLLL…FVNA), 349–396 (SGGA…DAAG), and 417–463 (MIYV…IQAG). Positions 549–572 (QVNGEAEHSPDREQSPDATPSVKQ) are disordered. The span at 553-563 (EAEHSPDREQS) shows a compositional bias: basic and acidic residues. Mn(2+)-binding residues include aspartate 711, histidine 713, aspartate 745, and asparagine 777. Residue histidine 778 is the Proton donor of the active site. Residues histidine 830 and histidine 909 each contribute to the Mn(2+) site. Residues 984–1009 (NANRPPTPTRGRPQAANNDRGSLAWI) form a disordered region.

The protein belongs to the PPP phosphatase family. BSU subfamily. It depends on Mn(2+) as a cofactor.

The protein localises to the nucleus. The catalysed reaction is O-phospho-L-seryl-[protein] + H2O = L-seryl-[protein] + phosphate. It carries out the reaction O-phospho-L-threonyl-[protein] + H2O = L-threonyl-[protein] + phosphate. The chain is Serine/threonine-protein phosphatase BSL2 homolog (BSL2) from Oryza sativa subsp. japonica (Rice).